The primary structure comprises 81 residues: Exodeoxyribonuclease 7 small subunit (81 aa).

A disordered region spans residues 61 to 81 (MNDSDQEVAFETPQGGTGDAD).

The protein belongs to the XseB family. In terms of assembly, heterooligomer composed of large and small subunits.

The protein localises to the cytoplasm. It carries out the reaction Exonucleolytic cleavage in either 5'- to 3'- or 3'- to 5'-direction to yield nucleoside 5'-phosphates.. Its function is as follows. Bidirectionally degrades single-stranded DNA into large acid-insoluble oligonucleotides, which are then degraded further into small acid-soluble oligonucleotides. This is Exodeoxyribonuclease 7 small subunit from Levilactobacillus brevis (strain ATCC 367 / BCRC 12310 / CIP 105137 / JCM 1170 / LMG 11437 / NCIMB 947 / NCTC 947) (Lactobacillus brevis).